A 357-amino-acid polypeptide reads, in one-letter code: Putative DENN domain-containing protein 10 B (357 aa).

Residues 1–140 enclose the uDENN domain; that stretch reads MAAAELADTQ…TKGICQSEEN (140 aa). The region spanning 159–299 is the cDENN domain; that stretch reads IKDIVSQFGM…PEKSESQVIQ (141 aa). A dDENN domain is found at 301–357; the sequence is IALKTREIFTNLAPFSEVSADGEKRVLNLEALKQKRFPPATENFLYHLAAAEQMLKI.

This sequence belongs to the DENND10 family.

Its subcellular location is the late endosome. In terms of biological role, may be a guanine nucleotide exchange factor (GEF). This Homo sapiens (Human) protein is Putative DENN domain-containing protein 10 B.